We begin with the raw amino-acid sequence, 499 residues long: Potassium voltage-gated channel subfamily A member 2 (499 aa).

The interval 1–26 is disordered; it reads MTVATGDPADEAAALPGHPQDTYDPE. Positions 1–125 are tetramerization domain; it reads MTVATGDPAD…YELGEEAMEM (125 aa). Topologically, residues 1–160 are cytoplasmic; the sequence is MTVATGDPAD…LLFEYPESSG (160 aa). The chain crosses the membrane as a helical span at residues 161 to 182; that stretch reads PARIIAIVSVMVILISIVSFCL. At 183–221 the chain is on the extracellular side; the sequence is ETLPIFRDENEDMHGSGVTFHTYSNSTIGYQQSTSFTDP. N207 is a glycosylation site (N-linked (GlcNAc...) asparagine). The helical transmembrane segment at 222-243 threads the bilayer; that stretch reads FFIVETLCIIWFSFEFLVRFFA. C244 is lipidated: S-palmitoyl cysteine. At 244–254 the chain is on the cytoplasmic side; it reads CPSKAGFFTNI. A helical membrane pass occupies residues 255–275; that stretch reads MNIIDIVAIIPYFITLGTELA. At 276–289 the chain is on the extracellular side; it reads EKPEDAQQGQQAMS. Residues 290–310 traverse the membrane as a helical; Voltage-sensor segment; sequence LAILRVIRLVRVFRIFKLSRH. The Cytoplasmic segment spans residues 311 to 325; that stretch reads SKGLQILGQTLKASM. An S4-S5 linker region spans residues 312-325; that stretch reads KGLQILGQTLKASM. A helical membrane pass occupies residues 326 to 347; the sequence is RELGLLIFFLFIGVILFSSAVY. Topologically, residues 348 to 361 are extracellular; that stretch reads FAEADERESQFPSI. The helical intramembrane region spans 362 to 373; that stretch reads PDAFWWAVVSMT. Positions 374 to 379 match the Selectivity filter motif; sequence TVGYGD. An intramembrane segment occupies 374-381; that stretch reads TVGYGDMV. At 382 to 388 the chain is on the extracellular side; the sequence is PTTIGGK. A helical membrane pass occupies residues 389–417; the sequence is IVGSLCAIAGVLTIALPVPVIVSNFNYFY. At 418-499 the chain is on the cytoplasmic side; sequence HRETEGEEQA…VNITKMLTDV (82 aa). Position 429 is a phosphotyrosine (Y429). Residues S434, S440, S441, and S449 each carry the phosphoserine modification. Y458 is modified (phosphotyrosine). S468 is modified (phosphoserine). The PDZ-binding signature appears at 497-499; the sequence is TDV.

This sequence belongs to the potassium channel family. A (Shaker) (TC 1.A.1.2) subfamily. Kv1.2/KCNA2 sub-subfamily. In terms of assembly, homotetramer and heterotetramer with other channel-forming alpha subunits, such as KCNA1, KCNA4, KCNA5, KCNA6 and KCNA7. Channel activity is regulated by interaction with the beta subunits, including KCNAB1 and KCNAB2. Identified in a complex with KCNA1 and KCNAB2. Identified in a complex with KCNA5 and KCNAB1. Identified in a complex with KCNA4 and FYN. Interacts with the beta subunit KCNAB1. Interacts with PTK2B. Interacts (via C-terminus) with CTTN. Interacts (via N-terminal cytoplasmic domain) with RHOA (GTP-bound form); this regulates channel activity by reducing location at the cell surface in response to CHRM1 activation. Interacts with DRD2. Interacts with SIGMAR1; cocaine consumption leads to increased interaction. Interacts with ADAM22. Interacts (via C-terminus) with the PDZ domains of DLG1, DLG2 and DLG4. Interacts with CNTNAP2. Interacts with ADAM11. Interacts with LYNX1. Post-translationally, phosphorylated on tyrosine residues; phosphorylation increases in response to ischemia. Phosphorylated on tyrosine residues by activated PTK2B/PYK2. Phosphorylation on tyrosine residues suppresses ion channel activity. Phosphorylated on tyrosine residues in response to CHRM1 activation; this abolishes interaction with CTTN. This is probably due to endocytosis of the phosphorylated channel subunits. Phosphorylated on serine residues in response to increased cAMP levels; phosphorylation is apparently not catalyzed by PKA. N-glycosylated, with complex, sialylated N-glycans. As to expression, detected in brain cortex. Detected in peroneal nerve in the juxtaparanodal regions of the node of Ranvier; expression is decreased in patients with diabetes mellitus that suffer from axonal neuropathy. Detected in paranodal and juxtanodal zones in myelinated spinal cord (at protein level).

The protein localises to the cell membrane. Its subcellular location is the membrane. It localises to the cell projection. It is found in the axon. The protein resides in the synapse. The protein localises to the endoplasmic reticulum membrane. Its subcellular location is the lamellipodium membrane. It localises to the synaptosome. It is found in the presynaptic cell membrane. The protein resides in the dendrite. The protein localises to the cell junction. Its subcellular location is the paranodal septate junction. The enzyme catalyses K(+)(in) = K(+)(out). Its activity is regulated as follows. Inhibited by 4-aminopyridine (4-AP) and charybdotoxin (CTX), but not by tetraethylammonium (TEA). Inhibited by dendrotoxin (DTX). Inhibited by tityustoxin-K alpha (TsTX-Kalpha), a toxin that is highly specific for KCNA2. Inhibited by maurotoxin. Inhibited by kappaM conotoxins kappaM-RIIIJ and kappaM-RIIIK; kappaM-RIIIJ has much higher affinity for channels containing KCNA2 than kappaM-RIIIK, with the exception of heterodimers formed by KCNA2 and KCNA7 where the opposite is true. Functionally, voltage-gated potassium channel that mediates transmembrane potassium transport in excitable membranes, primarily in the brain and the central nervous system, but also in the cardiovascular system. Prevents aberrant action potential firing and regulates neuronal output. Forms tetrameric potassium-selective channels through which potassium ions pass in accordance with their electrochemical gradient. The channel alternates between opened and closed conformations in response to the voltage difference across the membrane. Can form functional homotetrameric channels and heterotetrameric channels that contain variable proportions of KCNA1, KCNA2, KCNA4, KCNA5, KCNA6, KCNA7, and possibly other family members as well; channel properties depend on the type of alpha subunits that are part of the channel. Channel properties are modulated by cytoplasmic beta subunits that regulate the subcellular location of the alpha subunits and promote rapid inactivation of delayed rectifier potassium channels. In vivo, membranes probably contain a mixture of heteromeric potassium channel complexes, making it difficult to assign currents observed in intact tissues to any particular potassium channel family member. Homotetrameric KCNA2 forms a delayed-rectifier potassium channel that opens in response to membrane depolarization, followed by slow spontaneous channel closure. In contrast, a heteromultimer formed by KCNA2 and KCNA4 shows rapid inactivation. Regulates neuronal excitability and plays a role as pacemaker in the regulation of neuronal action potentials. KCNA2-containing channels play a presynaptic role and prevent hyperexcitability and aberrant action potential firing. Response to toxins that are selective for KCNA2-containing potassium channels suggests that in Purkinje cells, dendritic subthreshold KCNA2-containing potassium channels prevent random spontaneous calcium spikes, suppressing dendritic hyperexcitability without hindering the generation of somatic action potentials, and thereby play an important role in motor coordination. Plays a role in the induction of long-term potentiation of neuron excitability in the CA3 layer of the hippocampus. May function as down-stream effector for G protein-coupled receptors and inhibit GABAergic inputs to basolateral amygdala neurons. May contribute to the regulation of neurotransmitter release, such as gamma-aminobutyric acid (GABA). Contributes to the regulation of the axonal release of the neurotransmitter dopamine. Reduced KCNA2 expression plays a role in the perception of neuropathic pain after peripheral nerve injury, but not acute pain. Plays a role in the regulation of the time spent in non-rapid eye movement (NREM) sleep. In Homo sapiens (Human), this protein is Potassium voltage-gated channel subfamily A member 2 (KCNA2).